A 162-amino-acid polypeptide reads, in one-letter code: Cytochrome c-type biogenesis protein CcmE (162 aa).

Residues 1–7 lie on the Cytoplasmic side of the membrane; it reads MTRKQRR. Residues 8 to 28 traverse the membrane as a helical; Signal-anchor for type II membrane protein segment; it reads LTMIGGSLVVLAIAAALVLNA. Residues 29 to 162 are Periplasmic-facing; the sequence is LRDSIVFFST…EASGKQGVSQ (134 aa). 2 residues coordinate heme: histidine 122 and tyrosine 126. The segment at 138–162 is disordered; it reads QGHWKDDYGPQAGAVEASGKQGVSQ.

The protein belongs to the CcmE/CycJ family.

The protein localises to the cell inner membrane. Its function is as follows. Heme chaperone required for the biogenesis of c-type cytochromes. Transiently binds heme delivered by CcmC and transfers the heme to apo-cytochromes in a process facilitated by CcmF and CcmH. This chain is Cytochrome c-type biogenesis protein CcmE, found in Nitrobacter hamburgensis (strain DSM 10229 / NCIMB 13809 / X14).